A 323-amino-acid chain; its full sequence is D-alanine--D-alanine ligase (323 aa).

The ATP-grasp domain occupies 121 to 317 (RIWFLTNNIN…FTNLIEEIIK (197 aa)). 147 to 199 (PMKRPYVIKPLAQGSSIGVEVIFAEDDFNFADYDFPYGDQVIIEQYIKGQGRE) contributes to the ATP binding site. Residues Glu270, Glu284, and Asn286 each contribute to the Mg(2+) site.

The protein belongs to the D-alanine--D-alanine ligase family. Requires Mg(2+) as cofactor. Mn(2+) is required as a cofactor.

It localises to the cytoplasm. It catalyses the reaction 2 D-alanine + ATP = D-alanyl-D-alanine + ADP + phosphate + H(+). It participates in cell wall biogenesis; peptidoglycan biosynthesis. In terms of biological role, cell wall formation. The chain is D-alanine--D-alanine ligase from Rickettsia peacockii (strain Rustic).